We begin with the raw amino-acid sequence, 655 residues long: tRNA uridine 5-carboxymethylaminomethyl modification enzyme MnmG (655 aa).

13 to 18 (GGGHAG) contacts FAD. 281–295 (GPRYCPSVEDKINRF) provides a ligand contact to NAD(+).

The protein belongs to the MnmG family. Homodimer. Heterotetramer of two MnmE and two MnmG subunits. It depends on FAD as a cofactor.

Its subcellular location is the cytoplasm. NAD-binding protein involved in the addition of a carboxymethylaminomethyl (cmnm) group at the wobble position (U34) of certain tRNAs, forming tRNA-cmnm(5)s(2)U34. This is tRNA uridine 5-carboxymethylaminomethyl modification enzyme MnmG from Paracidovorax citrulli (strain AAC00-1) (Acidovorax citrulli).